The primary structure comprises 106 residues: Large ribosomal subunit protein eL42 (106 aa).

Belongs to the eukaryotic ribosomal protein eL42 family.

This chain is Large ribosomal subunit protein eL42 (RPL44), found in Kluyveromyces marxianus (Yeast).